An 81-amino-acid polypeptide reads, in one-letter code: Protein Vpu (81 aa).

The Extracellular segment spans residues 1-7 (MQSLEIL). The helical transmembrane segment at 8-28 (AIVALVVAAILAIVVWTIVGI) threads the bilayer. The Cytoplasmic segment spans residues 29–81 (EIRKTLRQKKIDRLIDRIRERAEDSGNESDGDEEELSALVEMGHHAPWDVDDL). The disordered stretch occupies residues 50-81 (AEDSGNESDGDEEELSALVEMGHHAPWDVDDL). Phosphoserine; by host CK2 occurs at positions 53 and 57. The span at 53-64 (SGNESDGDEEEL) shows a compositional bias: acidic residues. Basic and acidic residues predominate over residues 70-81 (MGHHAPWDVDDL).

This sequence belongs to the HIV-1 VPU protein family. Homopentamer. Interacts with host CD4 and BRTC; these interactions induce proteasomal degradation of CD4. Interacts with host BST2; this interaction leads to the degradation of host BST2. Interacts with host FBXW11. Interacts with host AP1M1; this interaction plays a role in the mistrafficking and subsequent degradation of host BST2. Interacts with host RANBP2; this interaction allows Vpu to down-regulate host BLM sumoylation. Post-translationally, phosphorylated by host CK2. This phosphorylation is necessary for interaction with human BTRC and degradation of CD4.

It is found in the host membrane. Ion channel activity is inhibited by hexamethylene amiloride in vitro. Functionally, enhances virion budding by targeting host CD4 and Tetherin/BST2 to proteasome degradation. Degradation of CD4 prevents any unwanted premature interactions between viral Env and its host receptor CD4 in the endoplasmic reticulum. Degradation of antiretroviral protein Tetherin/BST2 is important for virion budding, as BST2 tethers new viral particles to the host cell membrane. Mechanistically, Vpu bridges either CD4 or BST2 to BTRC, a substrate recognition subunit of the Skp1/Cullin/F-box protein E3 ubiquitin ligase, induces their ubiquitination and subsequent proteasomal degradation. The alteration of the E3 ligase specificity by Vpu seems to promote the degradation of host IKBKB, leading to NF-kappa-B down-regulation and subsequent apoptosis. Acts as a viroporin that forms an oligomeric ion channel in membranes. Modulates the host DNA repair mechanisms to promote degradation of nuclear viral cDNA in cells that are already productively infected in order to suppress immune sensing and proviral hyper-integration (superinfection). Manipulates PML-NBs and modulates SUMOylation of host BLM protein thereby enhancing its DNA-end processing activity toward viral unintegrated linear DNA. Also inhibits RAD52-mediated homologous repair of viral cDNA, preventing the generation of dead-end circular forms of single copies of the long terminal repeat and permitting sustained nucleolytic attack. This is Protein Vpu from Homo sapiens (Human).